Here is an 876-residue protein sequence, read N- to C-terminus: Paramyosin (876 aa).

Residues 1–28 (MSARSAKFMYRSGNAGASGDLSVEYGTD) form a nonhelical region region. Residues 29-855 (LGALTRLEDK…IRAKHRSWVT (827 aa)) are a coiled coil. The interval 856 to 876 (TSQVPGGTRQVFVTQEEQSNY) is nonhelical region.

This sequence belongs to the paramyosin family. In terms of assembly, homodimer.

It is found in the cytoplasm. It localises to the myofibril. Its function is as follows. Paramyosin is a major structural component of many thick filaments isolated from invertebrate muscles. The protein is Paramyosin of Sarcoptes scabiei (Itch mite).